Here is a 138-residue protein sequence, read N- to C-terminus: Large ribosomal subunit protein uL16 (138 aa).

A compositionally biased stretch (basic residues) spans 1 to 15; the sequence is MLSPKKVKYRKKQRG. The interval 1-21 is disordered; the sequence is MLSPKKVKYRKKQRGRLSGEA.

Belongs to the universal ribosomal protein uL16 family. As to quaternary structure, part of the 50S ribosomal subunit.

Functionally, binds 23S rRNA and is also seen to make contacts with the A and possibly P site tRNAs. This Borreliella burgdorferi (strain ATCC 35210 / DSM 4680 / CIP 102532 / B31) (Borrelia burgdorferi) protein is Large ribosomal subunit protein uL16.